The primary structure comprises 149 residues: Large ribosomal subunit protein bL9 (149 aa).

Belongs to the bacterial ribosomal protein bL9 family.

Its function is as follows. Binds to the 23S rRNA. This chain is Large ribosomal subunit protein bL9, found in Actinobacillus pleuropneumoniae serotype 3 (strain JL03).